A 275-amino-acid chain; its full sequence is 2,3,4,5-tetrahydropyridine-2,6-dicarboxylate N-succinyltransferase (275 aa).

The substrate site is built by R107 and D144.

The protein belongs to the transferase hexapeptide repeat family. As to quaternary structure, homotrimer.

It localises to the cytoplasm. The enzyme catalyses (S)-2,3,4,5-tetrahydrodipicolinate + succinyl-CoA + H2O = (S)-2-succinylamino-6-oxoheptanedioate + CoA. It functions in the pathway amino-acid biosynthesis; L-lysine biosynthesis via DAP pathway; LL-2,6-diaminopimelate from (S)-tetrahydrodipicolinate (succinylase route): step 1/3. This chain is 2,3,4,5-tetrahydropyridine-2,6-dicarboxylate N-succinyltransferase, found in Polynucleobacter asymbioticus (strain DSM 18221 / CIP 109841 / QLW-P1DMWA-1) (Polynucleobacter necessarius subsp. asymbioticus).